Reading from the N-terminus, the 524-residue chain is Unconventional prefoldin RPB5 interactor (524 aa).

Disordered regions lie at residues 1-20 (MEAP…LRAP), 284-320 (SVNG…EDNS), and 335-373 (VRIN…ELPM). Over residues 296 to 307 (DDGDNNDDGGDS) the composition is skewed to acidic residues. The residue at position 361 (S361) is a Phosphoserine; by RPS6KB1. S431 is subject to Phosphoserine.

The protein belongs to the RNA polymerase II subunit 5-mediating protein family. As to quaternary structure, homodimer. Component of the PAQosome complex which is responsible for the biogenesis of several protein complexes and which consists of R2TP complex members RUVBL1, RUVBL2, RPAP3 and PIH1D1, URI complex members PFDN2, PFDN6, PDRG1, UXT and URI1 as well as ASDURF, POLR2E and DNAAF10/WDR92. Interacts with POLR2E/RPB5, RUVBL2 and RUVBL1. Interacts with PFDN2, PFDN4 and STAP1; the interactions are phosphorylation-dependent and occur in a growth-dependent manner in the mitochondrion. Interacts with UXT. Interacts with PPP1CC; the interaction is phosphorylation-dependent and occurs in a growth factor-dependent manner. Interacts (via the middle C-terminal region) with GTF2F1 and GTF2F2. Interacts with DMAP1. Interacts with TSC1 and TSC2. Interacts with PRPF8 and EFTUD2 in a ZNHIT2-dependent manner. In terms of processing, phosphorylated. Phosphorylation occurs essentially on serine residues. Phosphorylation occurs in response to androgen treatment in prostate cancer cells in a mTOR-dependent manner. Phosphorylated; hyperhosphorylated in mitochondria in a mTORC-dependent signaling pathway. Phosphorylated at Ser-361 by RPS6KB1 in a growth factor- and rapamycin-dependent manner. S6K1-mediated mitochondrial phosphorylation at Ser-361 disrupts the URI1-PPP1CC complex in the mitochondrion, relieves PPP1CC phosphatase inhibition activity and hence engages a negative feedback diminishing RPS6KB1 kinase activity, preventing sustained S6K1-dependent signaling.

The protein localises to the nucleus. It localises to the cytoplasm. It is found in the mitochondrion. The protein resides in the cell projection. Its subcellular location is the dendrite. Functionally, involved in gene transcription regulation. Acts as a transcriptional repressor in concert with the corepressor UXT to regulate androgen receptor (AR) transcription. May act as a tumor suppressor to repress AR-mediated gene transcription and to inhibit anchorage-independent growth in prostate cancer cells. Required for cell survival in ovarian cancer cells. Together with UXT, associates with chromatin to the NKX3-1 promoter region. Its function is as follows. Plays a central role in maintaining S6K1 signaling and BAD phosphorylation under normal growth conditions thereby protecting cells from potential deleterious effects of sustained S6K1 signaling. The URI1-PPP1CC complex acts as a central component of a negative feedback mechanism that counteracts excessive S6K1 survival signaling to BAD in response to growth factors. Mediates inhibition of PPP1CC phosphatase activity in mitochondria. Coordinates the regulation of nutrient-sensitive gene expression availability in a mTOR-dependent manner. Seems to be a scaffolding protein able to assemble a prefoldin-like complex that contains PFDs and proteins with roles in transcription and ubiquitination. The sequence is that of Unconventional prefoldin RPB5 interactor (URI1) from Bos taurus (Bovine).